We begin with the raw amino-acid sequence, 325 residues long: Phosphate acyltransferase (325 aa).

Belongs to the PlsX family. In terms of assembly, homodimer. Probably interacts with PlsY.

It is found in the cytoplasm. The enzyme catalyses a fatty acyl-[ACP] + phosphate = an acyl phosphate + holo-[ACP]. It participates in lipid metabolism; phospholipid metabolism. Catalyzes the reversible formation of acyl-phosphate (acyl-PO(4)) from acyl-[acyl-carrier-protein] (acyl-ACP). This enzyme utilizes acyl-ACP as fatty acyl donor, but not acyl-CoA. The protein is Phosphate acyltransferase of Mycoplasmopsis pulmonis (strain UAB CTIP) (Mycoplasma pulmonis).